The chain runs to 457 residues: MSQLNPKVGFVSLGCPKALVDSERILTQLRVEGYDIVPSYDAADVVVVNTCGFIDSAVTESLDAIGEAMNANGKVIVTGCLGKRPEQIREAYPQVLAVSGPQDYQSVMEAVHAALPPRHDPFVDLVPDYGIKLTPRHYAYLKISEGCNHRCSFCIIPSMRGDLVSRPVDEVLREAERLVRGGVKELLVVSQDTSAYGVDLKYAERPWRDRLYQTRMKALCEGLSELGVWTRLHYVYPYPHVDDVIGLMAEGKLLPYLDIPFQHASPRILKLMKRPGAVEKTLERVQRWKAMCPEITVRSTFIVGFPGETDAEFESLLDFLDQAQLDRVGAFAYSPVDGASANALPDQVPEEVKQERLARFMAKQAQISALRLESKIGSVQQCLVDVIEDDIAVARSRADAPEIDGLVHIQNGGELGLKVGDLVDVEITDSDEHDLFGDALPSGHAVQPGRTLNLQIV.

The MTTase N-terminal domain occupies 6 to 116 (PKVGFVSLGC…VMEAVHAALP (111 aa)). The [4Fe-4S] cluster site is built by Cys-15, Cys-51, Cys-80, Cys-147, Cys-151, and Cys-154. The Radical SAM core domain occupies 133–371 (LTPRHYAYLK…AKQAQISALR (239 aa)). Positions 373–441 (ESKIGSVQQC…EHDLFGDALP (69 aa)) constitute a TRAM domain.

Belongs to the methylthiotransferase family. RimO subfamily. The cofactor is [4Fe-4S] cluster.

Its subcellular location is the cytoplasm. It catalyses the reaction L-aspartate(89)-[ribosomal protein uS12]-hydrogen + (sulfur carrier)-SH + AH2 + 2 S-adenosyl-L-methionine = 3-methylsulfanyl-L-aspartate(89)-[ribosomal protein uS12]-hydrogen + (sulfur carrier)-H + 5'-deoxyadenosine + L-methionine + A + S-adenosyl-L-homocysteine + 2 H(+). Catalyzes the methylthiolation of an aspartic acid residue of ribosomal protein uS12. The sequence is that of Ribosomal protein uS12 methylthiotransferase RimO from Xanthomonas axonopodis pv. citri (strain 306).